Here is a 614-residue protein sequence, read N- to C-terminus: MASLSFTQFLSFPRCNADVPCLLQSHGFVKFRGERWNGKQSFSMAAGRRKLSESAPLEEEGNDGNGAVVGKKPSKSVKRTTKKKVVVKDEPLEEISEFLVDNDDVLDKESIVSALKPKKTRTRKKAAAASSDVEEVKTEKKVRRKRTVKKDKDVEDDLATIMDAEVSDVEEALAVESTDTESEEEEIDLSKHEGEDISHTYGWPPLVCCFGSAQHAFVPSGRPANRLLDYELHERMRDAKWAPEKYIRAPGGCAGGVAIALASLGGKVAFMGKLGADDYGQAMLYYLNVCKVQTRSVKIDGKRVTACSTMKISKRGRLKSTCIKPCAEDSLSKSEINVDVLKEAKMFYFSTHSLLDKKMMSTTIQAIKISKQLGNVIFYDLNLPLPLWHSSEETKSFIQEVWNLADVIEITKQELEFLCGIEPTEEFDTENNDISKFVHYPPETVEQLWHENLKVLFVTNGTSKIHYYTKEHNGAVSGMEDVPITPFTRDMSASGDGIVAGLIRMLTVQPDLMNNKGYLERTARYAIECGIIDQWLLAQTRGYPPKDDMEEEEDDEEEDEVESDPNGIRSITEKEYRTSKPYDEPDGPYVMKPVEEREYKKLELVGSMFEDGSL.

Residues 1-44 (MASLSFTQFLSFPRCNADVPCLLQSHGFVKFRGERWNGKQSFSM) constitute a chloroplast transit peptide. 2 disordered regions span residues 47 to 75 (GRRK…KPSK) and 542 to 592 (GYPP…YVMK). Acidic residues predominate over residues 548–563 (DMEEEEDDEEEDEVES). Positions 571–583 (ITEKEYRTSKPYD) are enriched in basic and acidic residues.

The protein belongs to the carbohydrate kinase PfkB family. As to quaternary structure, interacts with CITRX/TRXz. Binds to FLN1 and PTAC5. Associates with the plastid-encoded RNA polymerase (PEP) complex.

It is found in the plastid. Its subcellular location is the chloroplast. Its function is as follows. Required for proper chloroplast development, most likely through regulating plastid-encoded polymerase (PEP) dependent chloroplast transcription. Acts as a component of the transcriptionally active plastid chromosome that is required for plastid gene expression. This chain is Fructokinase-like 2, chloroplastic, found in Arabidopsis thaliana (Mouse-ear cress).